Here is a 357-residue protein sequence, read N- to C-terminus: DNA replication and repair protein RecF (357 aa).

31-38 is an ATP binding site; sequence GQNGAGKT.

The protein belongs to the RecF family.

Its subcellular location is the cytoplasm. In terms of biological role, the RecF protein is involved in DNA metabolism; it is required for DNA replication and normal SOS inducibility. RecF binds preferentially to single-stranded, linear DNA. It also seems to bind ATP. This chain is DNA replication and repair protein RecF, found in Coxiella burnetii (strain Dugway 5J108-111).